Reading from the N-terminus, the 260-residue chain is 14-3-3-like protein GF14-F (260 aa).

Residues 241-260 (NAEDGGDEIKEAAKPEGEGH) form a disordered region. The span at 247 to 260 (DEIKEAAKPEGEGH) shows a compositional bias: basic and acidic residues.

The protein belongs to the 14-3-3 family. As to quaternary structure, may form a complex with the transcriptional activator VP1 and the bZIP transcription factor EMBP1. As to expression, expressed in seedlings, roots and panicles and at lower levels in flag leaves and internodes.

It localises to the cytoplasm. Its subcellular location is the nucleus. Functionally, is associated with a DNA binding complex that binds to the G box, a well-characterized cis-acting DNA regulatory element found in plant genes. In Oryza sativa subsp. japonica (Rice), this protein is 14-3-3-like protein GF14-F (GF14F).